The following is a 352-amino-acid chain: Chorismate synthase (352 aa).

Residue arginine 48 participates in NADP(+) binding. Residues arginine 125–serine 127, asparagine 237–alanine 238, glycine 278, lysine 293–serine 297, and arginine 319 each bind FMN.

It belongs to the chorismate synthase family. Homotetramer. The cofactor is FMNH2.

The catalysed reaction is 5-O-(1-carboxyvinyl)-3-phosphoshikimate = chorismate + phosphate. The protein operates within metabolic intermediate biosynthesis; chorismate biosynthesis; chorismate from D-erythrose 4-phosphate and phosphoenolpyruvate: step 7/7. Functionally, catalyzes the anti-1,4-elimination of the C-3 phosphate and the C-6 proR hydrogen from 5-enolpyruvylshikimate-3-phosphate (EPSP) to yield chorismate, which is the branch point compound that serves as the starting substrate for the three terminal pathways of aromatic amino acid biosynthesis. This reaction introduces a second double bond into the aromatic ring system. The polypeptide is Chorismate synthase (Francisella tularensis subsp. mediasiatica (strain FSC147)).